A 164-amino-acid chain; its full sequence is SsrA-binding protein (164 aa).

A disordered region spans residues 141-164; it reads KLHDKRQDEKQKSIKREINSALKR. Residues 145 to 158 are compositionally biased toward basic and acidic residues; it reads KRQDEKQKSIKREI.

Belongs to the SmpB family.

It localises to the cytoplasm. Its function is as follows. Required for rescue of stalled ribosomes mediated by trans-translation. Binds to transfer-messenger RNA (tmRNA), required for stable association of tmRNA with ribosomes. tmRNA and SmpB together mimic tRNA shape, replacing the anticodon stem-loop with SmpB. tmRNA is encoded by the ssrA gene; the 2 termini fold to resemble tRNA(Ala) and it encodes a 'tag peptide', a short internal open reading frame. During trans-translation Ala-aminoacylated tmRNA acts like a tRNA, entering the A-site of stalled ribosomes, displacing the stalled mRNA. The ribosome then switches to translate the ORF on the tmRNA; the nascent peptide is terminated with the 'tag peptide' encoded by the tmRNA and targeted for degradation. The ribosome is freed to recommence translation, which seems to be the essential function of trans-translation. This Prochlorococcus marinus (strain MIT 9215) protein is SsrA-binding protein.